Reading from the N-terminus, the 359-residue chain is Transcription elongation factor A N-terminal and central domain-containing protein (359 aa).

Residues 1–82 enclose the TFIIS N-terminal domain; it reads MSDKNQIIAR…AKWRGFYKST (82 aa). The disordered stretch occupies residues 84–118; the sequence is CKPRQSPKVLHTNANKEESAAVSQDVSQDETSGSS. A compositionally biased stretch (polar residues) spans 104 to 118; it reads AVSQDVSQDETSGSS. The TFIIS central domain maps to 182–298; that stretch reads VRSKCVELLY…EHCLPQSVDG (117 aa).

The protein is Transcription elongation factor A N-terminal and central domain-containing protein (Tceanc) of Mus musculus (Mouse).